Consider the following 159-residue polypeptide: uncharacterized protein (159 aa).

Residues 1–139 enclose the N-acetyltransferase domain; that stretch reads MNIIPTCQVP…TARKMKPEIP (139 aa).

This is an uncharacterized protein from Bacillus subtilis (strain 168).